We begin with the raw amino-acid sequence, 200 residues long: dITP/XTP pyrophosphatase (200 aa).

8-13 (TGNQGK) contacts substrate. The Proton acceptor role is filled by D69. D69 lines the Mg(2+) pocket. Substrate is bound by residues S70, 154–157 (FGYD), K177, and 182–183 (HR).

It belongs to the HAM1 NTPase family. Homodimer. It depends on Mg(2+) as a cofactor.

The catalysed reaction is XTP + H2O = XMP + diphosphate + H(+). It catalyses the reaction dITP + H2O = dIMP + diphosphate + H(+). The enzyme catalyses ITP + H2O = IMP + diphosphate + H(+). Functionally, pyrophosphatase that catalyzes the hydrolysis of nucleoside triphosphates to their monophosphate derivatives, with a high preference for the non-canonical purine nucleotides XTP (xanthosine triphosphate), dITP (deoxyinosine triphosphate) and ITP. Seems to function as a house-cleaning enzyme that removes non-canonical purine nucleotides from the nucleotide pool, thus preventing their incorporation into DNA/RNA and avoiding chromosomal lesions. The protein is dITP/XTP pyrophosphatase of Vibrio parahaemolyticus serotype O3:K6 (strain RIMD 2210633).